We begin with the raw amino-acid sequence, 74 residues long: Translational regulator CsrA (74 aa).

This sequence belongs to the CsrA/RsmA family. Homodimer; the beta-strands of each monomer intercalate to form a hydrophobic core, while the alpha-helices form wings that extend away from the core.

It localises to the cytoplasm. Functionally, a translational regulator that binds mRNA to regulate translation initiation and/or mRNA stability. Usually binds in the 5'-UTR at or near the Shine-Dalgarno sequence preventing ribosome-binding, thus repressing translation. Its main target seems to be the major flagellin gene, while its function is anatagonized by FliW. The chain is Translational regulator CsrA from Bacillus velezensis (strain DSM 23117 / BGSC 10A6 / LMG 26770 / FZB42) (Bacillus amyloliquefaciens subsp. plantarum).